Here is an 81-residue protein sequence, read N- to C-terminus: Antitoxin VapB20 (81 aa).

Functionally, antitoxin component of a type II toxin-antitoxin (TA) system. Neutralizes the toxic effect of cognate toxin VapC20. The polypeptide is Antitoxin VapB20 (vapB20) (Mycobacterium tuberculosis (strain CDC 1551 / Oshkosh)).